The sequence spans 328 residues: D-cysteine desulfhydrase (328 aa).

Lysine 51 bears the N6-(pyridoxal phosphate)lysine mark.

It belongs to the ACC deaminase/D-cysteine desulfhydrase family. Homodimer. Pyridoxal 5'-phosphate serves as cofactor.

It catalyses the reaction D-cysteine + H2O = hydrogen sulfide + pyruvate + NH4(+) + H(+). Functionally, catalyzes the alpha,beta-elimination reaction of D-cysteine and of several D-cysteine derivatives. It could be a defense mechanism against D-cysteine. The protein is D-cysteine desulfhydrase of Salmonella typhi.